Consider the following 155-residue polypeptide: UPF0305 protein MTH_811 (155 aa).

It belongs to the UPF0305 family.

The protein is UPF0305 protein MTH_811 of Methanothermobacter thermautotrophicus (strain ATCC 29096 / DSM 1053 / JCM 10044 / NBRC 100330 / Delta H) (Methanobacterium thermoautotrophicum).